We begin with the raw amino-acid sequence, 366 residues long: Probable dual-specificity RNA methyltransferase RlmN (366 aa).

Residue glutamate 107 is the Proton acceptor of the active site. The Radical SAM core domain maps to 113 to 342; sequence AEERMTACLS…MAQKFHVTVR (230 aa). Residues cysteine 120 and cysteine 353 are joined by a disulfide bond. [4Fe-4S] cluster is bound by residues cysteine 127, cysteine 131, and cysteine 134. S-adenosyl-L-methionine-binding positions include 177 to 178, serine 210, 233 to 235, and asparagine 310; these read GE and SLH. The S-methylcysteine intermediate role is filled by cysteine 353.

The protein belongs to the radical SAM superfamily. RlmN family. Requires [4Fe-4S] cluster as cofactor.

The protein resides in the cytoplasm. The catalysed reaction is adenosine(2503) in 23S rRNA + 2 reduced [2Fe-2S]-[ferredoxin] + 2 S-adenosyl-L-methionine = 2-methyladenosine(2503) in 23S rRNA + 5'-deoxyadenosine + L-methionine + 2 oxidized [2Fe-2S]-[ferredoxin] + S-adenosyl-L-homocysteine. It catalyses the reaction adenosine(37) in tRNA + 2 reduced [2Fe-2S]-[ferredoxin] + 2 S-adenosyl-L-methionine = 2-methyladenosine(37) in tRNA + 5'-deoxyadenosine + L-methionine + 2 oxidized [2Fe-2S]-[ferredoxin] + S-adenosyl-L-homocysteine. Specifically methylates position 2 of adenine 2503 in 23S rRNA and position 2 of adenine 37 in tRNAs. This Chlorobium chlorochromatii (strain CaD3) protein is Probable dual-specificity RNA methyltransferase RlmN.